Consider the following 177-residue polypeptide: Thymidine kinase (177 aa).

Position 11-18 (11-18) interacts with ATP; the sequence is GPMFSGKS. Residue Glu-83 is the Proton acceptor of the active site. Phe-113 contributes to the substrate binding site. 2 residues coordinate Zn(2+): Cys-138 and Cys-141. Substrate is bound at residue 157–161; it reads IEIIG. The Zn(2+) site is built by Cys-170 and Cys-173.

The protein belongs to the thymidine kinase family. In terms of assembly, homotetramer. Two molecules of substrate bind to each enzyme tetramer.

The catalysed reaction is thymidine + ATP = dTMP + ADP + H(+). Phosphorylates thymidine and thymidine analogs, such as azidothymidine (AZT). Part of the salvage pathway for pyrimidine deoxyribonucleotide synthesis. The sequence is that of Thymidine kinase (OPG101) from Vaccinia virus (strain Tian Tan) (VACV).